Consider the following 203-residue polypeptide: Small ribosomal subunit protein uS4 (203 aa).

Residues 20–45 (LPGLTRKRPKNTNPPGMHGAERKKKS) are disordered. The S4 RNA-binding domain occupies 92–155 (MRLDCIVFRL…SSRKLVAAYA (64 aa)).

The protein belongs to the universal ribosomal protein uS4 family. Part of the 30S ribosomal subunit. Contacts protein S5. The interaction surface between S4 and S5 is involved in control of translational fidelity.

In terms of biological role, one of the primary rRNA binding proteins, it binds directly to 16S rRNA where it nucleates assembly of the body of the 30S subunit. Functionally, with S5 and S12 plays an important role in translational accuracy. This chain is Small ribosomal subunit protein uS4, found in Synechococcus sp. (strain JA-3-3Ab) (Cyanobacteria bacterium Yellowstone A-Prime).